The primary structure comprises 37 residues: Photosystem I reaction center subunit VIII (37 aa).

Residues 10–30 traverse the membrane as a helical segment; that stretch reads IFVPLVGLVFPAIAMASLSLY.

This sequence belongs to the PsaI family.

The protein resides in the plastid. It localises to the chloroplast thylakoid membrane. In terms of biological role, may help in the organization of the PsaL subunit. The chain is Photosystem I reaction center subunit VIII from Gossypium hirsutum (Upland cotton).